A 158-amino-acid chain; its full sequence is NKG2-F type II integral membrane protein (158 aa).

A compositionally biased stretch (polar residues) spans 1-12 (MNKQRGTYSEVS). The tract at residues 1–25 (MNKQRGTYSEVSLAQDPKRQQRKLK) is disordered. Topologically, residues 1–74 (MNKQRGTYSE…LPPPEKLTAE (74 aa)) are cytoplasmic. The chain crosses the membrane as a helical; Signal-anchor for type II membrane protein span at residues 75–95 (VLGIICIVLMATVLKTIVLIP). Topologically, residues 96–158 (CIGVLEQNNF…VLRRTLICFL (63 aa)) are extracellular.

Can form disulfide-bonded heterodimer with CD94. Natural killer cells.

The protein resides in the membrane. May play a role as a receptor for the recognition of MHC class I HLA-E molecules by NK cells. This is NKG2-F type II integral membrane protein (KLRC4) from Homo sapiens (Human).